The sequence spans 248 residues: tRNA (guanine-N(1)-)-methyltransferase (248 aa).

S-adenosyl-L-methionine contacts are provided by residues Gly113 and 133 to 138 (IGDYVL).

This sequence belongs to the RNA methyltransferase TrmD family. Homodimer.

The protein resides in the cytoplasm. The catalysed reaction is guanosine(37) in tRNA + S-adenosyl-L-methionine = N(1)-methylguanosine(37) in tRNA + S-adenosyl-L-homocysteine + H(+). Specifically methylates guanosine-37 in various tRNAs. The chain is tRNA (guanine-N(1)-)-methyltransferase from Shewanella woodyi (strain ATCC 51908 / MS32).